The following is a 211-amino-acid chain: Large ribosomal subunit protein uL4 (211 aa).

Over residues 41–52 (QTNARQGTASTK) the composition is skewed to polar residues. Residues 41–78 (QTNARQGTASTKTRAEVRGGGRKPWRQKGTGRARAGSI) form a disordered region. Basic residues predominate over residues 60 to 71 (GGRKPWRQKGTG).

The protein belongs to the universal ribosomal protein uL4 family. Part of the 50S ribosomal subunit.

One of the primary rRNA binding proteins, this protein initially binds near the 5'-end of the 23S rRNA. It is important during the early stages of 50S assembly. It makes multiple contacts with different domains of the 23S rRNA in the assembled 50S subunit and ribosome. Its function is as follows. Forms part of the polypeptide exit tunnel. This Rippkaea orientalis (strain PCC 8801 / RF-1) (Cyanothece sp. (strain PCC 8801)) protein is Large ribosomal subunit protein uL4.